The following is a 339-amino-acid chain: HTH-type transcriptional regulator SyrM 2 (339 aa).

The HTH lysR-type domain occupies 32-89; sequence VDLNLLVELEALLQYRNITHAAQHVGRSQPAMSRALSRLRDMFNDDLLVRGSSGLVPT. Residues 49–68 constitute a DNA-binding region (H-T-H motif); that stretch reads ITHAAQHVGRSQPAMSRALS.

Belongs to the LysR transcriptional regulatory family.

Functionally, acts in trans to stimulate nod gene expression. The protein is HTH-type transcriptional regulator SyrM 2 (syrM2) of Sinorhizobium fredii (strain NBRC 101917 / NGR234).